We begin with the raw amino-acid sequence, 319 residues long: MGYSRILGTGSFLPSQVLTNAQLAERVETSDEWIVSRTGIRARHIADEGHKTSDLALRAAQAAIASAGIDKGEIDLIIVATTTPDMVFPSTACILQEKLGLPGVQAFDVQAVCAGFVYALTTANAYIKSGLAKKALVVGAEIMSRVLDWDDRRTCVLFGDGAGAVVLGESDEPGILHAKLAADGRYQGLLNTPAQISGGKIQGIPYLHMDGPAVFKFAVKSLSEIATATLAEAGVEQASLDWLVPHQANLRIIESTAKHLGLPMDKVVVTLPEQGNTSAASIPLALDVAVRDGRIRRGQTVMLEGIGGGFAWGAVLLTF.

Catalysis depends on residues Cys-113 and His-246. The ACP-binding stretch occupies residues 247-251 (QANLR). Asn-276 is an active-site residue.

This sequence belongs to the thiolase-like superfamily. FabH family. Homodimer.

Its subcellular location is the cytoplasm. It catalyses the reaction malonyl-[ACP] + acetyl-CoA + H(+) = 3-oxobutanoyl-[ACP] + CO2 + CoA. The protein operates within lipid metabolism; fatty acid biosynthesis. In terms of biological role, catalyzes the condensation reaction of fatty acid synthesis by the addition to an acyl acceptor of two carbons from malonyl-ACP. Catalyzes the first condensation reaction which initiates fatty acid synthesis and may therefore play a role in governing the total rate of fatty acid production. Possesses both acetoacetyl-ACP synthase and acetyl transacylase activities. Its substrate specificity determines the biosynthesis of branched-chain and/or straight-chain of fatty acids. This Chromobacterium violaceum (strain ATCC 12472 / DSM 30191 / JCM 1249 / CCUG 213 / NBRC 12614 / NCIMB 9131 / NCTC 9757 / MK) protein is Beta-ketoacyl-[acyl-carrier-protein] synthase III.